A 515-amino-acid chain; its full sequence is Galactose/methyl galactoside import ATP-binding protein MglA (515 aa).

ABC transporter domains lie at 8 to 243 (LEMR…VGRE) and 254 to 499 (IPKE…AKYL). Position 40-47 (40-47 (GENGAGKS)) interacts with ATP.

Belongs to the ABC transporter superfamily. Galactose/methyl galactoside importer (TC 3.A.1.2.3) family. As to quaternary structure, the complex is composed of one ATP-binding protein (MglA), two transmembrane proteins (MglC) and a solute-binding protein (MglB).

Its subcellular location is the cell membrane. It catalyses the reaction D-galactose(out) + ATP + H2O = D-galactose(in) + ADP + phosphate + H(+). The enzyme catalyses methyl beta-D-galactoside(out) + ATP + H2O = methyl beta-D-galactoside(in) + ADP + phosphate + H(+). In terms of biological role, part of the ABC transporter complex MglABC involved in galactose/methyl galactoside import. Responsible for energy coupling to the transport system. This is Galactose/methyl galactoside import ATP-binding protein MglA from Clostridium perfringens (strain ATCC 13124 / DSM 756 / JCM 1290 / NCIMB 6125 / NCTC 8237 / Type A).